Consider the following 150-residue polypeptide: UPF0756 membrane protein STH2648 (150 aa).

4 consecutive transmembrane segments (helical) span residues 13-33, 52-72, 85-105, and 111-131; these read ALGVVARNALIVTAAGVVLIL, AGLIFLLIAVLVPFATGEVGW, LAAILGGIIAAVLSGYGVTLL, and VIVGMVVGTILGVVLFKGIPV.

It belongs to the UPF0756 family.

Its subcellular location is the cell membrane. The chain is UPF0756 membrane protein STH2648 from Symbiobacterium thermophilum (strain DSM 24528 / JCM 14929 / IAM 14863 / T).